Consider the following 289-residue polypeptide: Polyamine aminopropyltransferase (289 aa).

In terms of domain architecture, PABS spans 5–245 (PGPIVLVEPL…YAVNYILGSL (241 aa)). Glutamine 36 contacts S-methyl-5'-thioadenosine. Residues histidine 67 and glutamate 91 each contribute to the spermidine site. S-methyl-5'-thioadenosine-binding positions include aspartate 111 and 143–144 (DG). The active-site Proton acceptor is the aspartate 164.

It belongs to the spermidine/spermine synthase family. As to quaternary structure, homodimer or homotetramer.

It is found in the cytoplasm. It carries out the reaction S-adenosyl 3-(methylsulfanyl)propylamine + putrescine = S-methyl-5'-thioadenosine + spermidine + H(+). The protein operates within amine and polyamine biosynthesis; spermidine biosynthesis; spermidine from putrescine: step 1/1. Functionally, catalyzes the irreversible transfer of a propylamine group from the amino donor S-adenosylmethioninamine (decarboxy-AdoMet) to putrescine (1,4-diaminobutane) to yield spermidine. This is Polyamine aminopropyltransferase from Pyrobaculum arsenaticum (strain DSM 13514 / JCM 11321 / PZ6).